Consider the following 142-residue polypeptide: MALERTFSIIKPNAVANNNIGAIYARFESAGFNIIAAKMLHLTKEQAEGFYAEHKGRPFFDGLVEFMTSGPIMVQVLEGENAVQRHRDIMGATNPDNALAGTLRADFADSFTANAVHGSDAVESAQREIAYFFAADEIFPRS.

ATP-binding residues include lysine 11, phenylalanine 59, arginine 87, threonine 93, arginine 104, and asparagine 114. Histidine 117 serves as the catalytic Pros-phosphohistidine intermediate.

Belongs to the NDK family. In terms of assembly, homotetramer. Mg(2+) is required as a cofactor.

The protein localises to the cytoplasm. The enzyme catalyses a 2'-deoxyribonucleoside 5'-diphosphate + ATP = a 2'-deoxyribonucleoside 5'-triphosphate + ADP. The catalysed reaction is a ribonucleoside 5'-diphosphate + ATP = a ribonucleoside 5'-triphosphate + ADP. Major role in the synthesis of nucleoside triphosphates other than ATP. The ATP gamma phosphate is transferred to the NDP beta phosphate via a ping-pong mechanism, using a phosphorylated active-site intermediate. This Yersinia pseudotuberculosis serotype O:1b (strain IP 31758) protein is Nucleoside diphosphate kinase.